A 441-amino-acid polypeptide reads, in one-letter code: Endothelin receptor type B (441 aa).

Residues 1-26 form the signal peptide; that stretch reads MQPLPSLCGRALVALILACGVAGIQA. Topologically, residues 27 to 100 are extracellular; that stretch reads EEREFPPAGA…GPIEIKETFK (74 aa). Positions 30 to 87 are disordered; the sequence is EFPPAGATQPLPGTGEMMETPTETSWPGRSNASDPRSSATPQIPRGGRMAGIPPRTPP. Low complexity predominate over residues 41-53; it reads PGTGEMMETPTET. The span at 54–70 shows a compositional bias: polar residues; that stretch reads SWPGRSNASDPRSSATP. Residues 101-125 traverse the membrane as a helical segment; that stretch reads YINTVVSCLVFVLGIIGNSTLLRII. Over 126-136 the chain is Cytoplasmic; it reads YKNKCMRNGPN. Residues 137–162 traverse the membrane as a helical segment; it reads ILIASLALGDLLHIIIDIPINTYKLL. The Extracellular segment spans residues 163–174; the sequence is AKDWPFGVEMCK. Cysteine 173 and cysteine 254 are disulfide-bonded. Residues 175–196 form a helical membrane-spanning segment; sequence LVPFIQKASVGITVLSLCALSI. At 197-217 the chain is on the cytoplasmic side; it reads DRYRAVASWSRIKGIGVPKWT. The chain crosses the membrane as a helical span at residues 218–242; that stretch reads AVEIVLIWVVSVVLAVPEAVGFDII. The Extracellular segment spans residues 243 to 270; that stretch reads TSDHIGNKLRICLLHPTQKTAFMQFYKT. A helical transmembrane segment spans residues 271–295; it reads AKDWWLFSFYFCLPLAITALFYTLM. At 296–323 the chain is on the cytoplasmic side; the sequence is TCEMLRKKSGMQIALNDHLKQRREVAKT. Position 304 is a phosphoserine (serine 304). Residues 324 to 349 traverse the membrane as a helical segment; it reads VFCLVLVFALCWLPLHLSRILKLTLY. Topologically, residues 350–361 are extracellular; that stretch reads DQHDPRRCEFLS. The helical transmembrane segment at 362–388 threads the bilayer; it reads FLLVLDYIGINMASLNSCINPIALYLV. Over 389 to 441 the chain is Cytoplasmic; sequence SKRFKNCFKSCLCCWCQSFEEKQSLEEKQSCLKFKANDHGYDNFRSSNKYSSS. S-palmitoyl cysteine attachment occurs at residues cysteine 402 and cysteine 404. Residues serine 418, serine 434, and serine 435 each carry the phosphoserine modification. Tyrosine 438 carries the post-translational modification Phosphotyrosine. Phosphoserine is present on residues serine 439, serine 440, and serine 441.

The protein belongs to the G-protein coupled receptor 1 family. Endothelin receptor subfamily. EDNRB sub-subfamily. Post-translationally, it is not sure whether phosphorylation is on Ser-434 or Ser-435.

The protein resides in the cell membrane. Its function is as follows. Non-specific receptor for endothelin 1, 2, and 3. Mediates its action by association with G proteins that activate a phosphatidylinositol-calcium second messenger system. The protein is Endothelin receptor type B (EDNRB) of Bos taurus (Bovine).